Here is a 236-residue protein sequence, read N- to C-terminus: Geranylgeranylglyceryl phosphate synthase (236 aa).

Lys13 lines the sn-glycerol 1-phosphate pocket. Mg(2+) contacts are provided by Asp15 and Thr42. Sn-glycerol 1-phosphate is bound by residues 161–166 (YVEYSG), Gly191, and 211–212 (GD).

Belongs to the GGGP/HepGP synthase family. Group I subfamily. Requires Mg(2+) as cofactor.

The protein resides in the cytoplasm. It catalyses the reaction sn-glycerol 1-phosphate + (2E,6E,10E)-geranylgeranyl diphosphate = sn-3-O-(geranylgeranyl)glycerol 1-phosphate + diphosphate. Its pathway is membrane lipid metabolism; glycerophospholipid metabolism. Prenyltransferase that catalyzes the transfer of the geranylgeranyl moiety of geranylgeranyl diphosphate (GGPP) to the C3 hydroxyl of sn-glycerol-1-phosphate (G1P). This reaction is the first ether-bond-formation step in the biosynthesis of archaeal membrane lipids. The protein is Geranylgeranylglyceryl phosphate synthase of Halobacterium salinarum (strain ATCC 700922 / JCM 11081 / NRC-1) (Halobacterium halobium).